The primary structure comprises 361 residues: Putative pumilio homolog 22 (361 aa).

The PUM-HD domain maps to 5-348; sequence RGYDLASQVL…NIVAIIDSET (344 aa). Pumilio repeat units lie at residues 27–63 and 64–103; these read HITY…EFLD and LIAQ…RLHE. The stretch at 104–131 is one Pumilio 3; degenerate repeat; the sequence is LMAEFDEVLSTSVTADVDKLHKLASKLM. A Pumilio 4 repeat occupies 132–167; sequence LDSDLFFEFVITRRGSLMIQIILGKSEEVDQVILAG. One copy of the Pumilio 5; degenerate repeat lies at 168 to 205; the sequence is VKQRFIDVTTNFYGYRIMIQTIKVFKKRGDLKVYDQIL. One copy of the Pumilio 6; degenerate repeat lies at 206–243; the sequence is RLIGVHALYLTKDPDMGNKTFQHAINLHHQDCTTFIAC. 2 Pumilio repeats span residues 244–284 and 285–319; these read GLQS…EIVK and CDED…DFFG.

Its subcellular location is the cytoplasm. Sequence-specific RNA-binding protein that regulates translation and mRNA stability by binding the 3'-UTR of target mRNAs. The sequence is that of Putative pumilio homolog 22 (APUM22) from Arabidopsis thaliana (Mouse-ear cress).